The chain runs to 670 residues: Microtubule-associated protein ssm4 (670 aa).

The 43-residue stretch at 23–65 (GSTDFESGIWLGVELLNGKGKNDGSVKGKRYFSCEKGKGIFVR) folds into the CAP-Gly domain. Coiled coils occupy residues 209–254 (KSEL…KNSI) and 404–582 (VKTR…KLAD). A Phosphoserine modification is found at serine 460. At threonine 606 the chain carries Phosphothreonine.

The protein resides in the cytoplasm. It is found in the cytoskeleton. Its subcellular location is the spindle. Binds to nuclear microtubules with the effect of either modifying their structure or function. This then promotes meiotic nuclear division. This Schizosaccharomyces pombe (strain 972 / ATCC 24843) (Fission yeast) protein is Microtubule-associated protein ssm4 (ssm4).